The chain runs to 468 residues: UDP-N-acetylmuramate--L-alanine ligase (468 aa).

Residue 114 to 120 coordinates ATP; the sequence is GTHGKTT.

The protein belongs to the MurCDEF family.

The protein resides in the cytoplasm. The enzyme catalyses UDP-N-acetyl-alpha-D-muramate + L-alanine + ATP = UDP-N-acetyl-alpha-D-muramoyl-L-alanine + ADP + phosphate + H(+). Its pathway is cell wall biogenesis; peptidoglycan biosynthesis. Functionally, cell wall formation. This Methylocella silvestris (strain DSM 15510 / CIP 108128 / LMG 27833 / NCIMB 13906 / BL2) protein is UDP-N-acetylmuramate--L-alanine ligase.